Reading from the N-terminus, the 242-residue chain is 7-cyano-7-deazaguanine synthase (242 aa).

Positions 1 to 25 (MNSRKDKNSKGKNSDTKRKKSSQEN) are disordered. 32-42 (LSGGLDSTTCL) contributes to the ATP binding site. Zn(2+) is bound by residues cysteine 212, cysteine 221, cysteine 224, and cysteine 227.

It belongs to the QueC family. The cofactor is Zn(2+).

The enzyme catalyses 7-carboxy-7-deazaguanine + NH4(+) + ATP = 7-cyano-7-deazaguanine + ADP + phosphate + H2O + H(+). It functions in the pathway purine metabolism; 7-cyano-7-deazaguanine biosynthesis. In terms of biological role, catalyzes the ATP-dependent conversion of 7-carboxy-7-deazaguanine (CDG) to 7-cyano-7-deazaguanine (preQ(0)). The chain is 7-cyano-7-deazaguanine synthase from Leptospira borgpetersenii serovar Hardjo-bovis (strain JB197).